A 211-amino-acid chain; its full sequence is Mediator-associated protein 2 (211 aa).

The interval 128–211 is disordered; that stretch reads QQKLVGSVTN…KSKKKVKKEE (84 aa). Residues 134-148 are compositionally biased toward low complexity; that stretch reads SVTNSSKKSSNLTQS. Serine 173 carries the post-translational modification Phosphoserine. Residues 189 to 198 show a composition bias toward low complexity; that stretch reads STSTVSGSSE. Residues 202-211 show a composition bias toward basic residues; that stretch reads KSKKKVKKEE.

In terms of assembly, associated with the Mediator complex.

The protein localises to the nucleus. The chain is Mediator-associated protein 2 from Arabidopsis thaliana (Mouse-ear cress).